The primary structure comprises 157 residues: Dihydrofolate reductase type 5 (157 aa).

Positions 2–156 constitute a DHFR domain; the sequence is KVSLMAAKAK…INYCYQIWQK (155 aa).

This sequence belongs to the dihydrofolate reductase family. In terms of assembly, homodimer.

It catalyses the reaction (6S)-5,6,7,8-tetrahydrofolate + NADP(+) = 7,8-dihydrofolate + NADPH + H(+). Its pathway is cofactor biosynthesis; tetrahydrofolate biosynthesis; 5,6,7,8-tetrahydrofolate from 7,8-dihydrofolate: step 1/1. Key enzyme in folate metabolism. Catalyzes an essential reaction for de novo glycine and purine synthesis, and for DNA precursor synthesis. In Escherichia coli, this protein is Dihydrofolate reductase type 5 (dhfrV).